The following is a 172-amino-acid chain: Translation initiation factor IF-3 (172 aa).

The protein belongs to the IF-3 family. As to quaternary structure, monomer.

The protein resides in the cytoplasm. In terms of biological role, IF-3 binds to the 30S ribosomal subunit and shifts the equilibrium between 70S ribosomes and their 50S and 30S subunits in favor of the free subunits, thus enhancing the availability of 30S subunits on which protein synthesis initiation begins. This chain is Translation initiation factor IF-3, found in Bartonella tribocorum (strain CIP 105476 / IBS 506).